We begin with the raw amino-acid sequence, 293 residues long: Prohibitin-2 (293 aa).

Residues 21-41 traverse the membrane as a helical; Signal-anchor for type II membrane protein segment; it reads FGGGFGLLALGGVGLLALSSL. The stretch at 190–235 forms a coiled coil; it reads GREYAAAIEAKQVAQQEAERARFLVEKALQDKRSIIVKAEGEAQSA.

It belongs to the prohibitin family. The mitochondrial prohibitin complex consists of two subunits (PHB1 and PHB2), assembled into a membrane-associated ring-shaped supercomplex of approximately 1 mDa.

It is found in the mitochondrion inner membrane. The protein resides in the cytoplasm. The protein localises to the nucleus. It localises to the cell membrane. In terms of biological role, protein with pleiotropic attributes mediated in a cell-compartment- and tissue-specific manner, which include the plasma membrane-associated cell signaling functions, mitochondrial chaperone, and transcriptional co-regulator of transcription factors and sex steroid hormones in the nucleus. In the mitochondria, together with PHB, forms large ring complexes (prohibitin complexes) in the inner mitochondrial membrane (IMM) and functions as a chaperone protein that stabilizes mitochondrial respiratory enzymes and maintains mitochondrial integrity in the IMM, which is required for mitochondrial morphogenesis, neuronal survival, and normal lifespan. Functionally, in the nucleus, serves as transcriptional co-regulator. The protein is Prohibitin-2 (phbB) of Dictyostelium discoideum (Social amoeba).